Reading from the N-terminus, the 307-residue chain is tRNA pseudouridine synthase B (307 aa).

The active-site Nucleophile is D48.

Belongs to the pseudouridine synthase TruB family. Type 1 subfamily.

The enzyme catalyses uridine(55) in tRNA = pseudouridine(55) in tRNA. Its function is as follows. Responsible for synthesis of pseudouridine from uracil-55 in the psi GC loop of transfer RNAs. This chain is tRNA pseudouridine synthase B, found in Neisseria meningitidis serogroup B (strain ATCC BAA-335 / MC58).